Here is a 255-residue protein sequence, read N- to C-terminus: uncharacterized protein (255 aa).

A signal peptide spans 1–28 (MFKLNFKNNYKVLTLLFSLTLSMFVSNA). N-linked (GlcNAc...) asparagine glycosylation is found at N38, N61, and N83.

The protein resides in the secreted. This is an uncharacterized protein from Dictyostelium discoideum (Social amoeba).